A 535-amino-acid chain; its full sequence is T-complex protein 1 subunit beta (535 aa).

The residue at position 1 (Met-1) is an N-acetylmethionine. Ala-2 bears the N-acetylalanine mark. Phosphoserine is present on Ser-3. Lys-13 carries the N6-acetyllysine modification. Gly-44 lines the ADP pocket. Gly-44 contacts ATP. Position 60 is a phosphoserine (Ser-60). Asp-97 lines the Mg(2+) pocket. Gly-98, Thr-99, Thr-100, and Ser-101 together coordinate ADP. The ATP site is built by Gly-98, Thr-99, and Thr-100. An N6-acetyllysine modification is found at Lys-154. ADP contacts are provided by Ser-168 and Ser-169. Lys-181 bears the N6-acetyllysine mark. Residue Lys-248 forms a Glycyl lysine isopeptide (Lys-Gly) (interchain with G-Cter in SUMO2) linkage. Phosphoserine is present on Ser-260. The residue at position 261 (Thr-261) is a Phosphothreonine. ADP is bound by residues Gly-410, Glu-495, and Lys-500. ATP contacts are provided by Glu-495 and Lys-500.

Belongs to the TCP-1 chaperonin family. In terms of assembly, component of the chaperonin-containing T-complex (TRiC), a hexadecamer composed of two identical back-to-back stacked rings enclosing a protein folding chamber. Each ring is made up of eight different subunits: TCP1/CCT1, CCT2, CCT3, CCT4, CCT5, CCT6A/CCT6, CCT7, CCT8. Interacts with PACRG. Interacts with FLCN. Interacts with DLEC1. Interacts with SVEP1.

It is found in the cytoplasm. It catalyses the reaction ATP + H2O = ADP + phosphate + H(+). In terms of biological role, component of the chaperonin-containing T-complex (TRiC), a molecular chaperone complex that assists the folding of actin, tubulin and other proteins upon ATP hydrolysis. The TRiC complex mediates the folding of WRAP53/TCAB1, thereby regulating telomere maintenance. As part of the TRiC complex may play a role in the assembly of BBSome, a complex involved in ciliogenesis regulating transports vesicles to the cilia. The chain is T-complex protein 1 subunit beta from Homo sapiens (Human).